A 171-amino-acid chain; its full sequence is Protein BTG1 (171 aa).

Serine 159 is modified (phosphoserine).

The protein belongs to the BTG family. Interacts with CNOT7 and CNOT8.

In terms of biological role, anti-proliferative protein. The sequence is that of Protein BTG1 (BTG1) from Homo sapiens (Human).